Consider the following 219-residue polypeptide: Small ribosomal subunit protein eS1 (219 aa).

The protein belongs to the eukaryotic ribosomal protein eS1 family. Component of the small ribosomal subunit. Mature ribosomes consist of a small (40S) and a large (60S) subunit. The 40S subunit contains about 33 different proteins and 1 molecule of RNA (18S). The 60S subunit contains about 49 different proteins and 3 molecules of RNA (25S, 5.8S and 5S).

The protein resides in the cytoplasm. The protein is Small ribosomal subunit protein eS1 of Guillardia theta (Cryptophyte).